We begin with the raw amino-acid sequence, 249 residues long: Type III pantothenate kinase (249 aa).

6 to 13 (DCGNSLIK) serves as a coordination point for ATP. Residues Tyr93 and 100–103 (GLDR) each bind substrate. The active-site Proton acceptor is the Asp102. Asp122 lines the K(+) pocket. Thr125 lines the ATP pocket. Thr181 serves as a coordination point for substrate.

This sequence belongs to the type III pantothenate kinase family. Homodimer. It depends on NH4(+) as a cofactor. The cofactor is K(+).

It is found in the cytoplasm. The enzyme catalyses (R)-pantothenate + ATP = (R)-4'-phosphopantothenate + ADP + H(+). The protein operates within cofactor biosynthesis; coenzyme A biosynthesis; CoA from (R)-pantothenate: step 1/5. In terms of biological role, catalyzes the phosphorylation of pantothenate (Pan), the first step in CoA biosynthesis. In Pseudomonas paraeruginosa (strain DSM 24068 / PA7) (Pseudomonas aeruginosa (strain PA7)), this protein is Type III pantothenate kinase.